We begin with the raw amino-acid sequence, 426 residues long: Putative zinc protease AlbF (426 aa).

Histidine 66 is a binding site for Zn(2+). Glutamate 69 functions as the Proton acceptor in the catalytic mechanism. The Zn(2+) site is built by histidine 70 and glutamate 142.

The protein belongs to the peptidase M16 family. The cofactor is Zn(2+).

Functionally, required for production of the bacteriocin subtilosin. Could catalyze some step in the processing of presubtilosin. The sequence is that of Putative zinc protease AlbF (albF) from Bacillus subtilis (strain 168).